Here is a 1929-residue protein sequence, read N- to C-terminus: Intraflagellar transport protein 140 (1929 aa).

WD repeat units lie at residues 76-116 (QVQV…PSYK) and 119-158 (LHQE…YSFE). Positions 774–795 (LSTPDTGSPAVEAEESPQRQTR) are disordered. LRR repeat units follow at residues 957 to 980 (STSL…TFTK), 1019 to 1044 (ISLL…SLAE), and 1510 to 1532 (AQSL…LADI).

It localises to the cell projection. It is found in the cilium. Its subcellular location is the flagellum. The protein resides in the cytoplasm. The protein localises to the cytoskeleton. It localises to the flagellum axoneme. It is found in the flagellum basal body. Component of the intraflagellar transport complex A (IFT-A) involved in flagellar assembly. This chain is Intraflagellar transport protein 140, found in Giardia intestinalis (strain ATCC 50803 / WB clone C6) (Giardia lamblia).